The sequence spans 285 residues: Ribosomal protein L11 methyltransferase (285 aa).

S-adenosyl-L-methionine contacts are provided by Thr-131, Gly-154, Asp-176, and Asn-223.

Belongs to the methyltransferase superfamily. PrmA family.

The protein resides in the cytoplasm. It catalyses the reaction L-lysyl-[protein] + 3 S-adenosyl-L-methionine = N(6),N(6),N(6)-trimethyl-L-lysyl-[protein] + 3 S-adenosyl-L-homocysteine + 3 H(+). Its function is as follows. Methylates ribosomal protein L11. The chain is Ribosomal protein L11 methyltransferase from Brucella suis (strain ATCC 23445 / NCTC 10510).